Consider the following 430-residue polypeptide: Glutamate-1-semialdehyde 2,1-aminomutase (430 aa).

Lysine 268 carries the post-translational modification N6-(pyridoxal phosphate)lysine.

It belongs to the class-III pyridoxal-phosphate-dependent aminotransferase family. HemL subfamily. It depends on pyridoxal 5'-phosphate as a cofactor.

The protein resides in the cytoplasm. It catalyses the reaction (S)-4-amino-5-oxopentanoate = 5-aminolevulinate. The protein operates within porphyrin-containing compound metabolism; protoporphyrin-IX biosynthesis; 5-aminolevulinate from L-glutamyl-tRNA(Glu): step 2/2. The sequence is that of Glutamate-1-semialdehyde 2,1-aminomutase from Methanopyrus kandleri (strain AV19 / DSM 6324 / JCM 9639 / NBRC 100938).